Reading from the N-terminus, the 222-residue chain is Small ribosomal subunit protein uS3 (222 aa).

Positions I39 to K108 constitute a KH type-2 domain.

This sequence belongs to the universal ribosomal protein uS3 family. Part of the 30S ribosomal subunit. Forms a tight complex with proteins S10 and S14.

Functionally, binds the lower part of the 30S subunit head. Binds mRNA in the 70S ribosome, positioning it for translation. This chain is Small ribosomal subunit protein uS3, found in Clostridium perfringens (strain ATCC 13124 / DSM 756 / JCM 1290 / NCIMB 6125 / NCTC 8237 / Type A).